The following is a 729-amino-acid chain: Fatty acid oxidation complex subunit alpha (729 aa).

An enoyl-CoA hydratase/isomerase region spans residues 1 to 189 (MLYKGDTLYL…KVGLVDAVVK (189 aa)). Aspartate 296 contributes to the substrate binding site. The interval 311–729 (ETPKQAAVLG…AQPVGELQTA (419 aa)) is 3-hydroxyacyl-CoA dehydrogenase. Residues methionine 324, aspartate 343, 400–402 (VVE), lysine 407, and serine 429 contribute to the NAD(+) site. Residue histidine 450 is the For 3-hydroxyacyl-CoA dehydrogenase activity of the active site. Asparagine 453 contributes to the NAD(+) binding site. Positions 500 and 660 each coordinate substrate. Positions 708–729 (SHNAPYYPQVEPAQPVGELQTA) are disordered.

In the N-terminal section; belongs to the enoyl-CoA hydratase/isomerase family. The protein in the C-terminal section; belongs to the 3-hydroxyacyl-CoA dehydrogenase family. As to quaternary structure, heterotetramer of two alpha chains (FadB) and two beta chains (FadA).

It catalyses the reaction a (3S)-3-hydroxyacyl-CoA + NAD(+) = a 3-oxoacyl-CoA + NADH + H(+). It carries out the reaction a (3S)-3-hydroxyacyl-CoA = a (2E)-enoyl-CoA + H2O. The catalysed reaction is a 4-saturated-(3S)-3-hydroxyacyl-CoA = a (3E)-enoyl-CoA + H2O. The enzyme catalyses (3S)-3-hydroxybutanoyl-CoA = (3R)-3-hydroxybutanoyl-CoA. It catalyses the reaction a (3Z)-enoyl-CoA = a 4-saturated (2E)-enoyl-CoA. It carries out the reaction a (3E)-enoyl-CoA = a 4-saturated (2E)-enoyl-CoA. It functions in the pathway lipid metabolism; fatty acid beta-oxidation. Functionally, involved in the aerobic and anaerobic degradation of long-chain fatty acids via beta-oxidation cycle. Catalyzes the formation of 3-oxoacyl-CoA from enoyl-CoA via L-3-hydroxyacyl-CoA. It can also use D-3-hydroxyacyl-CoA and cis-3-enoyl-CoA as substrate. This is Fatty acid oxidation complex subunit alpha from Cronobacter sakazakii (strain ATCC BAA-894) (Enterobacter sakazakii).